The primary structure comprises 2189 residues: Chromatin modification-related protein eaf-1 (2189 aa).

Disordered regions lie at residues 183–400, 415–438, and 477–601; these read VQGS…SGAE, VIGK…TQHP, and EVAK…PPGL. The span at 234–253 shows a compositional bias: low complexity; the sequence is PTPQTVAPPATAPTSTTKTA. Residues 260-277 show a composition bias toward basic and acidic residues; it reads AGPKDDTVSRGDAEEKAR. Polar residues-rich tracts occupy residues 281 to 293, 300 to 312, and 319 to 333; these read TITS…SNGD, TLSS…QSAP, and ASAS…SQSF. A compositionally biased stretch (basic and acidic residues) spans 336–349; sequence PVSRPEQELRRATT. Over residues 534–543 the composition is skewed to low complexity; that stretch reads QPQPSSTAPS. A compositionally biased stretch (polar residues) spans 573–583; it reads ETQARTSQSSH. The HSA domain maps to 722-797; the sequence is PVRCLEPARP…PPVRAVDNAD (76 aa). The Myb-like domain maps to 985–1045; sequence FESRIASQWT…ECFERWVNLE (61 aa). 2 stretches are compositionally biased toward low complexity: residues 1320–1330 and 1336–1406; these read VAVQLQQQQHQ and QHPQ…QVTQ. 4 disordered regions span residues 1320-1428, 1622-1644, 1663-1831, and 1846-2189; these read VAVQ…PMRP, MQTQ…QAQA, QKQA…GQVQ, and VQGQ…APTK. 5 stretches are compositionally biased toward low complexity: residues 1663–1808, 1818–1831, 1846–1863, 1873–2089, and 2097–2189; these read QKQA…QGQG, GQGH…GQVQ, VQGQ…PQHA, QHAQ…QPQQ, and SQPQ…APTK.

It belongs to the EAF1 family. Component of the NuA4 histone acetyltransferase complex.

Its subcellular location is the nucleus. Component of the NuA4 histone acetyltransferase complex which is involved in transcriptional activation of selected genes principally by acetylation of nucleosomal histone H4 and H2A. The NuA4 complex is also involved in DNA repair. The polypeptide is Chromatin modification-related protein eaf-1 (eaf-1) (Neurospora crassa (strain ATCC 24698 / 74-OR23-1A / CBS 708.71 / DSM 1257 / FGSC 987)).